The chain runs to 513 residues: TRAF3-interacting JNK-activating modulator (513 aa).

3 disordered regions span residues 1-96 (MISS…GQVS), 130-171 (SSGI…KAEE), and 381-402 (SLQGDGEQQSSETQDLQDQLKK). The Cytoplasmic segment spans residues 1–485 (MISSDSRSSP…QLQVKENELQ (485 aa)). 2 stretches are compositionally biased toward basic and acidic residues: residues 17-31 (ESYEAKCERRQETRE) and 69-79 (RNLEEEKKGQA). Residues 266 to 488 (MKKVLLEMED…VKENELQCGQ (223 aa)) are a coiled coil. The span at 386–397 (GEQQSSETQDLQ) shows a compositional bias: polar residues. Residues 486–506 (CGQWLPVLMVVIATALAVFLA) traverse the membrane as a helical; Anchor for type IV membrane protein segment. Over 507–513 (NKGNLVI) the chain is Extracellular.

Interacts (via its coiled-coil domain) with TRAF3 (via isoleucine zipper). Interacts with MAP2K1. Interacts with PPP2CA; this interaction targets PPP2CA to the lysosomes. Interacts with MAVS. Interacts with TBK1. In terms of tissue distribution, expressed in bone marrow, spleen and thymus. Not detected in heart, kidney and liver.

It is found in the cell membrane. The protein localises to the golgi apparatus membrane. Its subcellular location is the lysosome membrane. It localises to the mitochondrion outer membrane. Functionally, adapter protein that plays essential roles in both innate and adaptive immunity. Plays a crucial role in the regulation of thymocyte development. Mechanistically, mediates TCR-stimulated activation through recruiting MAP2K1/MEK1 to the Golgi and, thereby, facilitating the interaction of MAP2K1/MEK1 with its activator BRAF. Also plays an essential role in regulatory T-cell stability and function by recruiting the serine-threonine phosphatase catalytic subunit (PPP2CA) to the lysosome, thereby facilitating the interaction of PP2Ac with the mTORC1 component RPTOR and restricting glycolytic metabolism. Positively regulates TLR4 signaling activity in macrophage-mediated inflammation by acting as a molecular clamp to facilitate LPS-induced translocation of TLR4 to lipid rafts. In response to viral infection, facilitates the recruitment of TRAF3 to MAVS within mitochondria leading to IRF3 activation and interferon production. However, participates in the maintenance of immune homeostasis and the prevention of overzealous innate immunity by promoting 'Lys-48'-dependent ubiquitination of TBK1. The chain is TRAF3-interacting JNK-activating modulator (Traf3ip3) from Mus musculus (Mouse).